Reading from the N-terminus, the 567-residue chain is MASEQSSPEINADNLNSSAADVHVQPPGEKEWSDGFYDKEVINGNTPDAPKRGFLGYLIIYLLCYPVSFGGFLPGWDSGITAGFINMDNFKMNFGSYKHSTGEYYLSNVRMGLLVAMFSVGCSIGGVAFARLADTLGRRLAIVIVVLVYMVGAIIQISSNHKWYQYFVGKIIYGLGAGGCSVLCPMLLSEIAPTDLRGGLVSLYQLNMTFGIFLGYCSVYGTRKYSNTAQWRIPVGLCFLWALIIIVGMLLVPESPRYLIECERHEEACVSIAKINKVSPEDPWVLKQADEINAGVLAQRELGEASWKELFSVKTKVLQRLITGILVQTFLQLTGENYFFFYGTTIFKSVGLTDGFETSIVLGTVNFFSTIIAVMVVDKIGRRKCLLFGAASMMACMVIFASIGVKCLYPHGQDGPSSKGAGNAMIVFTCFYIFCFATTWAPVAYIVVAESFPSKVKSKAMSISTAFNWLWQFLIGFFTPFITGSIHFYYGYVFVGCLVAMFLYVFFFLPETIGLSLEEIQLLYEEGIKPWKSASWVPPSRRGASSRETEAKKKSWKEVLKFPKSFN.

The segment covering 1–19 (MASEQSSPEINADNLNSSA) has biased composition (polar residues). The segment at 1 to 32 (MASEQSSPEINADNLNSSAADVHVQPPGEKEW) is disordered. Topologically, residues 1–55 (MASEQSSPEINADNLNSSAADVHVQPPGEKEWSDGFYDKEVINGNTPDAPKRGFL) are cytoplasmic. A helical transmembrane segment spans residues 56–76 (GYLIIYLLCYPVSFGGFLPGW). Topologically, residues 77 to 112 (DSGITAGFINMDNFKMNFGSYKHSTGEYYLSNVRMG) are extracellular. The chain crosses the membrane as a helical span at residues 113–133 (LLVAMFSVGCSIGGVAFARLA). The Cytoplasmic portion of the chain corresponds to 134–139 (DTLGRR). Residues 140–160 (LAIVIVVLVYMVGAIIQISSN) form a helical membrane-spanning segment. Residues 161-170 (HKWYQYFVGK) lie on the Extracellular side of the membrane. The chain crosses the membrane as a helical span at residues 171–191 (IIYGLGAGGCSVLCPMLLSEI). Residues 192 to 197 (APTDLR) are Cytoplasmic-facing. A helical membrane pass occupies residues 198-218 (GGLVSLYQLNMTFGIFLGYCS). The Extracellular segment spans residues 219–232 (VYGTRKYSNTAQWR). A helical membrane pass occupies residues 233 to 253 (IPVGLCFLWALIIIVGMLLVP). Over 254–336 (ESPRYLIECE…VQTFLQLTGE (83 aa)) the chain is Cytoplasmic. A helical membrane pass occupies residues 337–353 (NYFFFYGTTIFKSVGLT). The Extracellular portion of the chain corresponds to 354–359 (DGFETS). Residues 360–377 (IVLGTVNFFSTIIAVMVV) form a helical membrane-spanning segment. Topologically, residues 378 to 384 (DKIGRRK) are cytoplasmic. The helical transmembrane segment at 385-405 (CLLFGAASMMACMVIFASIGV) threads the bilayer. The Extracellular portion of the chain corresponds to 406–427 (KCLYPHGQDGPSSKGAGNAMIV). The chain crosses the membrane as a helical span at residues 428-448 (FTCFYIFCFATTWAPVAYIVV). Residues 449–465 (AESFPSKVKSKAMSIST) are Cytoplasmic-facing. Residues 466 to 486 (AFNWLWQFLIGFFTPFITGSI) form a helical membrane-spanning segment. A topological domain (extracellular) is located at residue H487. The helical transmembrane segment at 488–508 (FYYGYVFVGCLVAMFLYVFFF) threads the bilayer. Residues 509-567 (LPETIGLSLEEIQLLYEEGIKPWKSASWVPPSRRGASSRETEAKKKSWKEVLKFPKSFN) are Cytoplasmic-facing. The interval 533–555 (SASWVPPSRRGASSRETEAKKKS) is disordered. Basic and acidic residues predominate over residues 545 to 555 (SSRETEAKKKS).

The protein belongs to the major facilitator superfamily. Sugar transporter (TC 2.A.1.1) family.

Its subcellular location is the membrane. Probable glucose transporter. The chain is Hexose transporter HXT15 (HXT15) from Saccharomyces cerevisiae (strain ATCC 204508 / S288c) (Baker's yeast).